The primary structure comprises 197 residues: Ribonuclease HII (197 aa).

The 194-residue stretch at 4–197 (IWVCGVDEAG…VRKALESVAS (194 aa)) folds into the RNase H type-2 domain. The a divalent metal cation site is built by aspartate 10, glutamate 11, and aspartate 106.

The protein belongs to the RNase HII family. The cofactor is Mn(2+). Mg(2+) serves as cofactor.

It localises to the cytoplasm. It carries out the reaction Endonucleolytic cleavage to 5'-phosphomonoester.. Functionally, endonuclease that specifically degrades the RNA of RNA-DNA hybrids. In Polynucleobacter necessarius subsp. necessarius (strain STIR1), this protein is Ribonuclease HII.